Consider the following 782-residue polypeptide: Coiled-coil alpha-helical rod protein 1 (782 aa).

Basic and acidic residues-rich tracts occupy residues 62 to 74 (ERDV…EPGR) and 208 to 218 (ETRRAGEAKEL). Disordered stretches follow at residues 62-82 (ERDV…WGLE) and 177-218 (EQLS…AKEL). Coiled coils occupy residues 111–303 (LRET…SLTH), 344–437 (LMVQ…NAVS), and 498–691 (VTDV…QQEG).

In terms of tissue distribution, found in all tissues tested, abundantly expressed in heart, liver, skeletal muscle, kidney and pancreas, and to a lesser extent in lung and placenta. Overexpressed in keratinocytes of psoriatic lesions.

It is found in the cytoplasm. It localises to the nucleus. Its function is as follows. May be a regulator of keratinocyte proliferation or differentiation. The chain is Coiled-coil alpha-helical rod protein 1 (CCHCR1) from Homo sapiens (Human).